The chain runs to 245 residues: MKIRLLKPLLIVGVLLMIWQMVATLGSFPHYIFPSPQAVRQQLFTHAELLWQHTQVTLLEICLGLLLGFLFGLISALLLSFSRQISAVLLPILVISQAIPVFAIAPLLVLWFGYGMASKIVMSVLIIYFPVTAACYDGLRNTPQAWLDLAKTFNISPLRLLLKVRLPAALPAFASGLRIAVSVAPIGAVVGEWVGSSEGLGYLMIHANARMQVDLMFAALLILVSISLCLYFSIDWLLHRFIWSV.

Helical transmembrane passes span 9-29 (LLIV…GSFP), 61-81 (ICLG…LLSF), 92-112 (ILVI…VLWF), 115-135 (GMAS…TAAC), 170-190 (LPAF…GAVV), and 217-237 (FAAL…IDWL). In terms of domain architecture, ABC transmembrane type-1 spans 50 to 234 (LWQHTQVTLL…SISLCLYFSI (185 aa)).

The protein belongs to the binding-protein-dependent transport system permease family. CysTW subfamily.

The protein resides in the cell inner membrane. Probably part of a binding-protein-dependent transport system. Probably responsible for the translocation of the substrate across the membrane. The chain is Probable ABC transporter permease protein HI_0355 from Haemophilus influenzae (strain ATCC 51907 / DSM 11121 / KW20 / Rd).